Here is a 69-residue protein sequence, read N- to C-terminus: Calcium-binding protein (69 aa).

EF-hand domains are found at residues 2-37 and 38-69; these read VNRT…VNCP and FKKE…VLCS. Asp15, Asp17, Ser19, Lys21, Glu26, Asp51, Asp53, Asp55, Gln57, and Glu62 together coordinate Ca(2+).

This is Calcium-binding protein from Schistosoma mansoni (Blood fluke).